Reading from the N-terminus, the 212-residue chain is Phosphatidylserine decarboxylase proenzyme (212 aa).

Residue Ser182 is the Schiff-base intermediate with substrate; via pyruvic acid of the active site. Ser182 bears the Pyruvic acid (Ser); by autocatalysis mark.

The protein belongs to the phosphatidylserine decarboxylase family. PSD-A subfamily. As to quaternary structure, heterodimer of a large membrane-associated beta subunit and a small pyruvoyl-containing alpha subunit. It depends on pyruvate as a cofactor. Post-translationally, is synthesized initially as an inactive proenzyme. Formation of the active enzyme involves a self-maturation process in which the active site pyruvoyl group is generated from an internal serine residue via an autocatalytic post-translational modification. Two non-identical subunits are generated from the proenzyme in this reaction, and the pyruvate is formed at the N-terminus of the alpha chain, which is derived from the carboxyl end of the proenzyme. The post-translation cleavage follows an unusual pathway, termed non-hydrolytic serinolysis, in which the side chain hydroxyl group of the serine supplies its oxygen atom to form the C-terminus of the beta chain, while the remainder of the serine residue undergoes an oxidative deamination to produce ammonia and the pyruvoyl prosthetic group on the alpha chain.

Its subcellular location is the cell membrane. The enzyme catalyses a 1,2-diacyl-sn-glycero-3-phospho-L-serine + H(+) = a 1,2-diacyl-sn-glycero-3-phosphoethanolamine + CO2. It participates in phospholipid metabolism; phosphatidylethanolamine biosynthesis; phosphatidylethanolamine from CDP-diacylglycerol: step 2/2. Its function is as follows. Catalyzes the formation of phosphatidylethanolamine (PtdEtn) from phosphatidylserine (PtdSer). This is Phosphatidylserine decarboxylase proenzyme from Chlorobium chlorochromatii (strain CaD3).